The primary structure comprises 526 residues: Acetyl-CoA hydrolase (526 aa).

Threonine 2 carries the N-acetylthreonine modification. 277 to 281 provides a ligand contact to CoA; sequence GIGNI. Residue glutamate 302 is the 5-glutamyl coenzyme A thioester intermediate of the active site. Serine 350 carries the post-translational modification Phosphoserine. The CoA site is built by asparagine 392 and glycine 396.

Belongs to the acetyl-CoA hydrolase/transferase family. As to quaternary structure, monomer. Post-translationally, glycosylated; contains mannose.

It localises to the cytoplasm. The enzyme catalyses acetyl-CoA + H2O = acetate + CoA + H(+). In terms of biological role, presumably involved in regulating the intracellular acetyl-CoA pool for fatty acid and cholesterol synthesis and fatty acid oxidation. It may be involved in overall regulation of acetylation during melatonin synthesis. The polypeptide is Acetyl-CoA hydrolase (ACH1) (Saccharomyces cerevisiae (strain ATCC 204508 / S288c) (Baker's yeast)).